A 646-amino-acid polypeptide reads, in one-letter code: Capsid scaffolding protein (646 aa).

Catalysis depends on charge relay system residues His-55, Ser-123, and His-142. The tract at residues 336–355 (GDYILVPAAQYNQLVVGQHT) is interaction with pAP. A disordered region spans residues 421–483 (TKGSDPHVIQ…RPGERRAGRP (63 aa)). Positions 445–451 (RYARKRR) match the Nuclear localization signal motif. 2 stretches are compositionally biased toward basic and acidic residues: residues 452 to 462 (HDWDATTRDDL) and 471 to 480 (RSPRPGERRA). An interaction with major capsid protein region spans residues 626-646 (TGLEFGRDDADIFVSQMMSAR).

The protein belongs to the herpesviridae capsid scaffolding protein family. In terms of assembly, homomultimer. Interacts with major capsid protein. Exists in a monomer-dimer equilibrium with the dimer being the active species. Capsid scaffolding protein is cleaved by assemblin after formation of the spherical procapsid. As a result, the capsid obtains its mature, icosahedral shape. Cleavages occur at two or more sites: release (R-site) and maturation (M-site).

It is found in the host cytoplasm. It localises to the host nucleus. The enzyme catalyses Cleaves -Ala-|-Ser- and -Ala-|-Ala- bonds in the scaffold protein.. Its function is as follows. Acts as a scaffold protein by binding major capsid protein in the cytoplasm, inducing the nuclear localization of both proteins. Multimerizes in the nucleus such as major capsid protein forms the icosahedral T=16 capsid. Autocatalytic cleavage releases the assembly protein, and subsequently abolishes interaction with major capsid protein. Cleavages products are evicted from the capsid before or during DNA packaging. Protease that plays an essential role in virion assembly within the nucleus. Catalyzes the cleavage of the assembly protein after formation of the spherical procapsid. By that cleavage, the capsid matures and gains its icosahedral shape. The cleavage sites seem to include -Ala-Ser-, -Ala-Ala-, as well as Ala-Thr bonds. Assemblin and cleavages products are evicted from the capsid before or during DNA packaging. In terms of biological role, plays a major role in capsid assembly. Acts as a scaffold protein by binding major capsid protein. Multimerizes in the nucleus such as major capsid protein forms the icosahedral T=16 capsid. Cleaved by assemblin after capsid completion. The cleavages products are evicted from the capsid before or during DNA packaging. The sequence is that of Capsid scaffolding protein (35) from Equus caballus (Horse).